Consider the following 448-residue polypeptide: Binary larvicide subunit BinB (448 aa).

The interval 19-200 (TNYPLNTTPT…FVNSSFYAAA (182 aa)) is beta-trefoil domain. A disulfide bridge links Cys-67 with Cys-161. The segment at 226–407 (PKDAVRAVKG…APITNPLTLT (182 aa)) is probable pore-forming domain.

It belongs to the toxin_10 family. In terms of assembly, forms a heterodimer with BinA. Processed by proteases extracted from mosquito larval gut.

Its subcellular location is the spore. The protein localises to the perispore. Its function is as follows. Component of a binary toxin active against Culex and some Aedes mosquito larvae. This subunit is responsible for localized binding to specific regions of the host larval gut. The individual subunits are not toxic. BinAB and this subunit alone bind to the gastric caecum and posterior midgut of C.quinquefasciatus larvae. Binary toxin internalization into host gut cells requires both proteins. Does not bind to the midgut of Aedes aegypti. Toxic to Aedes atropalpus mosquito larvae; mortality towards both C.quinquefasciatus and A.atropalpus is maximal by 48 hours. A.aegypti is not very susceptible to this toxin. Binding component of binary toxin. The 51 kDa polypeptide acts synergetically with the 42 kDa polypeptide for expression of a larvicidal toxin. This is Binary larvicide subunit BinB from Lysinibacillus sphaericus (Bacillus sphaericus).